The primary structure comprises 141 residues: Nucleoside diphosphate kinase (141 aa).

6 residues coordinate ATP: Lys-11, Phe-59, Arg-87, Thr-93, Arg-104, and Asn-114. His-117 acts as the Pros-phosphohistidine intermediate in catalysis.

Belongs to the NDK family. As to quaternary structure, homotetramer. Requires Mg(2+) as cofactor.

Its subcellular location is the cytoplasm. The catalysed reaction is a 2'-deoxyribonucleoside 5'-diphosphate + ATP = a 2'-deoxyribonucleoside 5'-triphosphate + ADP. It carries out the reaction a ribonucleoside 5'-diphosphate + ATP = a ribonucleoside 5'-triphosphate + ADP. In terms of biological role, major role in the synthesis of nucleoside triphosphates other than ATP. The ATP gamma phosphate is transferred to the NDP beta phosphate via a ping-pong mechanism, using a phosphorylated active-site intermediate. The sequence is that of Nucleoside diphosphate kinase from Pseudomonas syringae pv. tomato (strain ATCC BAA-871 / DC3000).